Reading from the N-terminus, the 313-residue chain is UDP-glucose 4-epimerase (313 aa).

Residues 11–12 (FI), 31–36 (DDLSSG), 56–57 (DI), and 77–81 (LAAQI) each bind NAD(+). The substrate site is built by Ser-121 and Tyr-146. NAD(+)-binding residues include Tyr-146 and Lys-150. Tyr-146 acts as the Proton acceptor in catalysis. Substrate is bound by residues Asn-175, 189-190 (VV), 204-206 (KIF), Arg-213, and 271-274 (RLGD).

It belongs to the NAD(P)-dependent epimerase/dehydratase family. In terms of assembly, homodimer. Requires NAD(+) as cofactor.

The catalysed reaction is UDP-alpha-D-glucose = UDP-alpha-D-galactose. The protein operates within carbohydrate metabolism; galactose metabolism. In terms of biological role, involved in the metabolism of galactose. Catalyzes the conversion of UDP-galactose (UDP-Gal) to UDP-glucose (UDP-Glc) through a mechanism involving the transient reduction of NAD. The sequence is that of UDP-glucose 4-epimerase from Mycolicibacterium smegmatis (strain ATCC 700084 / mc(2)155) (Mycobacterium smegmatis).